A 126-amino-acid polypeptide reads, in one-letter code: Protein ApaG (126 aa).

Residues 2-126 (SDPRYQIDVS…FRLAVPGALH (125 aa)) enclose the ApaG domain.

The sequence is that of Protein ApaG from Ectopseudomonas mendocina (strain ymp) (Pseudomonas mendocina).